The sequence spans 505 residues: Protein MGF 505-4R (505 aa).

The protein belongs to the asfivirus MGF 505 family.

Functionally, plays a role in virus cell tropism, and may be required for efficient virus replication in macrophages. The polypeptide is Protein MGF 505-4R (Ornithodoros (relapsing fever ticks)).